Reading from the N-terminus, the 456-residue chain is Adenylosuccinate lyase (456 aa).

N(6)-(1,2-dicarboxyethyl)-AMP is bound by residues 15–16, 90–92, and 122–123; these read RY, NHD, and TS. The active-site Proton donor/acceptor is His171. Position 247 (Gln247) interacts with N(6)-(1,2-dicarboxyethyl)-AMP. Catalysis depends on Ser295, which acts as the Proton donor/acceptor. N(6)-(1,2-dicarboxyethyl)-AMP contacts are provided by residues Ser296, 301–303, Asn309, Arg335, and 340–344; these read KVN and STVLR.

The protein belongs to the lyase 1 family. Adenylosuccinate lyase subfamily. As to quaternary structure, homotetramer. Residues from neighboring subunits contribute catalytic and substrate-binding residues to each active site.

It catalyses the reaction N(6)-(1,2-dicarboxyethyl)-AMP = fumarate + AMP. It carries out the reaction (2S)-2-[5-amino-1-(5-phospho-beta-D-ribosyl)imidazole-4-carboxamido]succinate = 5-amino-1-(5-phospho-beta-D-ribosyl)imidazole-4-carboxamide + fumarate. It participates in purine metabolism; AMP biosynthesis via de novo pathway; AMP from IMP: step 2/2. The protein operates within purine metabolism; IMP biosynthesis via de novo pathway; 5-amino-1-(5-phospho-D-ribosyl)imidazole-4-carboxamide from 5-amino-1-(5-phospho-D-ribosyl)imidazole-4-carboxylate: step 2/2. Its function is as follows. Catalyzes two reactions in de novo purine nucleotide biosynthesis. Catalyzes the breakdown of 5-aminoimidazole- (N-succinylocarboxamide) ribotide (SAICAR or 2-[5-amino-1-(5-phospho-beta-D-ribosyl)imidazole-4-carboxamido]succinate) to 5-aminoimidazole-4-carboxamide ribotide (AICAR or 5-amino-1-(5-phospho-beta-D-ribosyl)imidazole-4-carboxamide) and fumarate, and of adenylosuccinate (ADS or N(6)-(1,2-dicarboxyethyl)-AMP) to adenosine monophosphate (AMP) and fumarate. The sequence is that of Adenylosuccinate lyase (purB) from Legionella pneumophila (strain Corby).